The primary structure comprises 352 residues: Nodal homolog 4-B (352 aa).

The signal sequence occupies residues 1–18 (MHLYFSCFILLFVPGGKS). The propeptide occupies 19 to 278 (LGINSHLKHM…TIANSRRHRR (260 aa)). N-linked (GlcNAc...) asparagine glycans are attached at residues N30, N37, N199, and N238. Positions 197 to 223 (GKNHSEGHMKQPKKLHRAKSAERRYQQ) are disordered.

This sequence belongs to the TGF-beta family. As to quaternary structure, homodimer; disulfide-linked.

The protein localises to the secreted. Cooperation and regulatory loops of multiple nodals are essential for mesendoderm patterning in early embryos. Plays a role in mesoderm formation and may be required for neural development. The protein is Nodal homolog 4-B (nodal4-b) of Xenopus laevis (African clawed frog).